A 378-amino-acid chain; its full sequence is Chaperone protein DnaJ (378 aa).

Positions 5–70 (DYYEVLGVAK…QKRAAYDQYG (66 aa)) constitute a J domain. The CR-type zinc finger occupies 138–216 (GYDTQIRVPS…CHGSGKVKET (79 aa)). Residues cysteine 151, cysteine 154, cysteine 168, cysteine 171, cysteine 190, cysteine 193, cysteine 204, and cysteine 207 each coordinate Zn(2+). CXXCXGXG motif repeat units follow at residues 151–158 (CEVCHGSG), 168–175 (CPTCHGQG), 190–197 (CPKCHGTG), and 204–211 (CVHCHGSG).

This sequence belongs to the DnaJ family. In terms of assembly, homodimer. The cofactor is Zn(2+).

It localises to the cytoplasm. Functionally, participates actively in the response to hyperosmotic and heat shock by preventing the aggregation of stress-denatured proteins and by disaggregating proteins, also in an autonomous, DnaK-independent fashion. Unfolded proteins bind initially to DnaJ; upon interaction with the DnaJ-bound protein, DnaK hydrolyzes its bound ATP, resulting in the formation of a stable complex. GrpE releases ADP from DnaK; ATP binding to DnaK triggers the release of the substrate protein, thus completing the reaction cycle. Several rounds of ATP-dependent interactions between DnaJ, DnaK and GrpE are required for fully efficient folding. Also involved, together with DnaK and GrpE, in the DNA replication of plasmids through activation of initiation proteins. This is Chaperone protein DnaJ from Burkholderia lata (strain ATCC 17760 / DSM 23089 / LMG 22485 / NCIMB 9086 / R18194 / 383).